The primary structure comprises 171 residues: Synaptonemal complex central element protein 2 (171 aa).

A disordered region spans residues Met-1–Phe-52. Over residues Ser-24 to Thr-36 the composition is skewed to basic and acidic residues. Coiled coils occupy residues Phe-52–Leu-83 and Gln-118–Glu-146.

Belongs to the SYCE family. Homodimer. Found in a complex with SYCP1 and SYCE1. Interacts with SYCP1 and SYCE1. Interacts with SYCE3. Interacts with TEX12. As to expression, meiotic cells (at protein level). Expressed in the ovary and testis.

Its subcellular location is the nucleus. The protein resides in the chromosome. Its function is as follows. Major component of the transverse central element of synaptonemal complexes (SCS), formed between homologous chromosomes during meiotic prophase. Requires SYCP1 in order to be incorporated into the central element. May have a role in the synaptonemal complex assembly, stabilization and recombination. This is Synaptonemal complex central element protein 2 (Syce2) from Mus musculus (Mouse).